The following is a 333-amino-acid chain: NADH-quinone oxidoreductase subunit H (333 aa).

8 helical membrane-spanning segments follow: residues 15–35 (FFIF…FVTY), 88–108 (FILA…VIPF), 117–137 (IGVG…GVLT), 159–179 (ISYE…TGSL), 191–211 (VWYI…AVAE), 241–261 (FFML…TVLF), 273–293 (FIPG…LFIW), and 313–333 (VLLP…ELFF).

The protein belongs to the complex I subunit 1 family. As to quaternary structure, NDH-1 is composed of 14 different subunits. Subunits NuoA, H, J, K, L, M, N constitute the membrane sector of the complex.

It localises to the cell membrane. The catalysed reaction is a quinone + NADH + 5 H(+)(in) = a quinol + NAD(+) + 4 H(+)(out). NDH-1 shuttles electrons from NADH, via FMN and iron-sulfur (Fe-S) centers, to quinones in the respiratory chain. The immediate electron acceptor for the enzyme in this species is believed to be ubiquinone. Couples the redox reaction to proton translocation (for every two electrons transferred, four hydrogen ions are translocated across the cytoplasmic membrane), and thus conserves the redox energy in a proton gradient. This subunit may bind ubiquinone. The protein is NADH-quinone oxidoreductase subunit H of Bacillus cytotoxicus (strain DSM 22905 / CIP 110041 / 391-98 / NVH 391-98).